The sequence spans 248 residues: Glutathione S-transferase omega-2 (248 aa).

In terms of domain architecture, GST N-terminal spans 22–101 (GVIRIYSMRF…YLDDVYPGRK (80 aa)). C32 (nucleophile) is an active-site residue. Residues K59, I72, and 85-86 (ES) each bind glutathione. In terms of domain architecture, GST C-terminal spans 106–231 (DPYERARQKM…VFLGFLNLYF (126 aa)).

It belongs to the GST superfamily. Omega family.

The enzyme catalyses RX + glutathione = an S-substituted glutathione + a halide anion + H(+). It catalyses the reaction L-dehydroascorbate + 2 glutathione = glutathione disulfide + L-ascorbate. It carries out the reaction methylarsonate + 2 glutathione + H(+) = methylarsonous acid + glutathione disulfide + H2O. In terms of biological role, exhibits glutathione-dependent thiol transferase activity. Has high dehydroascorbate reductase activity and may contribute to the recycling of ascorbic acid. Participates in the biotransformation of inorganic arsenic and reduces monomethylarsonic acid (MMA). This Mus musculus (Mouse) protein is Glutathione S-transferase omega-2 (Gsto2).